The chain runs to 250 residues: DNA repair protein RecO (250 aa).

It belongs to the RecO family.

Functionally, involved in DNA repair and RecF pathway recombination. The sequence is that of DNA repair protein RecO from Staphylococcus aureus (strain MRSA252).